Consider the following 432-residue polypeptide: Luc7-like protein 3 (432 aa).

Met1 is subject to N-acetylmethionine. Phosphoserine is present on residues Ser3, Ser110, and Ser115. Residues Lys124–Ser181 adopt a coiled-coil conformation. N6-acetyllysine is present on Lys231. Residues Leu234–Arg287 are compositionally biased toward basic and acidic residues. The tract at residues Leu234 to Asn432 is disordered. Residues Glu288 to Ser301 show a composition bias toward basic residues. Residues Arg302–Ser311 are compositionally biased toward basic and acidic residues. Residues Arg312–Ser367 show a composition bias toward basic residues. Residues Arg368 to Asn414 show a composition bias toward basic and acidic residues. Position 420 is a phosphoserine (Ser420). Residues Glu421–Asn432 show a composition bias toward basic and acidic residues. A Glycyl lysine isopeptide (Lys-Gly) (interchain with G-Cter in SUMO1); alternate cross-link involves residue Lys424. Residue Lys424 forms a Glycyl lysine isopeptide (Lys-Gly) (interchain with G-Cter in SUMO2); alternate linkage. Ser425 and Ser431 each carry phosphoserine.

This sequence belongs to the Luc7 family. As to quaternary structure, may interact with SFRS1 and form homodimers. Interacts with JMJD6. Interacts with RBM25. Interacts with RSRC1 (via Arg/Ser-rich domain). Interacts with RRP1B.

The protein resides in the nucleus speckle. Binds cAMP regulatory element DNA sequence. May play a role in RNA splicing. In Mus musculus (Mouse), this protein is Luc7-like protein 3 (Luc7l3).